A 914-amino-acid chain; its full sequence is Protein ECT2 (914 aa).

Position 2 is an N-acetylalanine (alanine 2). BRCT domains are found at residues 171–260 (LYCT…AAVD) and 266–354 (FKVP…MYLY). Threonine 359 carries the phosphothreonine; by PKC/PRKCI modification. Residues serine 367 and serine 370 each carry the phosphoserine modification. Position 373 is a phosphothreonine; by CDK1 (threonine 373). Serine 376 is modified (phosphoserine). 2 consecutive short sequence motifs (nuclear localization signal) follow at residues 378 to 382 (RKRRR) and 401 to 405 (PRKRP). Positions 388–449 (AQLSRETDVS…SKSSTPVPSK (62 aa)) are disordered. The span at 418–429 (DISNTPESSINY) shows a compositional bias: polar residues. The span at 432–449 (TPKSCTKSSKSSTPVPSK) shows a compositional bias: low complexity. At threonine 444 the chain carries Phosphothreonine; by CDK1. The region spanning 452–641 (ARWQVAKELY…KEVMTHINED (190 aa)) is the DH domain. Lysine 611 participates in a covalent cross-link: Glycyl lysine isopeptide (Lys-Gly) (interchain with G-Cter in SUMO2). A PH domain is found at 675–794 (RVETISLGEH…KMLCRHVANT (120 aa)). Residues serine 716 and serine 842 each carry the phosphoserine modification. A Phosphothreonine; by CDK1 modification is found at threonine 846. The interval 857-884 (TSHGSVEGRSPSSNDKHVMSRLSSTSSL) is disordered. A phosphoserine mark is found at serine 861 and serine 866.

Homodimer. Homooligomer. Found in the centralspindlin complex. Interacts with NR1I3. Interacts (Thr-359 phosphorylated form) with PARD6A; the interaction is observed in cancer cells. Interacts (Thr-359 phosphorylated form) with PRKCI; the interaction is observed in cancer cells. Interacts with PKP4; the interaction is observed at the midbody. Interacts with RACGAP1/CYK4; the interaction is direct, occurs in a microtubule-dependent manner, occurs at anaphase and during cytokinesis, is inhibited in metaphase by phosphorylation of ECT2 on Thr-373 and is stimulated in early anaphase by dephosphorylation of ECT2 probably on Thr-373 through CDK1 activity. Interacts with PLK1; the interaction is stimulated upon its phosphorylation on Thr-444. Interacts with RHOA; the interaction results in allosteric activation of ECT2. Interacts with KIF23, PARD3, PARD6B and PRKCQ. Interacts with NEDD9/HEF1. In terms of processing, phosphorylated by PLK1 in vitro. Hyperphosphorylated during the G2 phase of the cell cycle. Phosphorylation at Thr-373 occurs during the G2/M phase, relieves its auto-inhibition status and stimulates its GEF activity. Phosphorylation at Thr-444 in G2/M phase is required for subsequent binding with PLK1 and Rho exchange activation. Dephosphorylated at the time of cytokinesis. Phosphorylation at Thr-359 is required for its transformation activity in cancer cells. Expressed in lung epithelial cells (at protein level). Expressed in squamous cell carcinoma, primary non-small cell lung cancer tumors and lung adenocarcinoma.

Its subcellular location is the nucleus. The protein localises to the cytoplasm. It localises to the cytoskeleton. It is found in the spindle. The protein resides in the cleavage furrow. Its subcellular location is the midbody. The protein localises to the cell junction. It localises to the tight junction. It is found in the microtubule organizing center. The protein resides in the centrosome. With respect to regulation, autoinhibited by the C-terminal PH domain which folds back and binds to the surface of the DH domain, blocking binding of RHOA to the catalytic center of the DH domain. The 2nd BRCT domain is also involved in inhibition, probably by helping to impede RHOA binding. Allosterically activated by binding of activated GTP-bound RHOA to the PH domain which stimulates the release of PH inhibition and promotes the binding of substrate RHOA to the catalytic center. Binding of phosphorylated RACGAP1 to the N-terminal BRCT domain-containing region also releases autoinhibition. In terms of biological role, guanine nucleotide exchange factor (GEF) that catalyzes the exchange of GDP for GTP. Promotes guanine nucleotide exchange on the Rho family members of small GTPases, like RHOA, RHOC, RAC1 and CDC42. Required for signal transduction pathways involved in the regulation of cytokinesis. Component of the centralspindlin complex that serves as a microtubule-dependent and Rho-mediated signaling required for the myosin contractile ring formation during the cell cycle cytokinesis. Regulates the translocation of RHOA from the central spindle to the equatorial region. Plays a role in the control of mitotic spindle assembly; regulates the activation of CDC42 in metaphase for the process of spindle fibers attachment to kinetochores before chromosome congression. Involved in the regulation of epithelial cell polarity; participates in the formation of epithelial tight junctions in a polarity complex PARD3-PARD6-protein kinase PRKCQ-dependent manner. Plays a role in the regulation of neurite outgrowth. Inhibits phenobarbital (PB)-induced NR1I3 nuclear translocation. Stimulates the activity of RAC1 through its association with the oncogenic PARD6A-PRKCI complex in cancer cells, thereby acting to coordinately drive tumor cell proliferation and invasion. Also stimulates genotoxic stress-induced RHOB activity in breast cancer cells leading to their cell death. In Homo sapiens (Human), this protein is Protein ECT2.